An 84-amino-acid chain; its full sequence is Small ribosomal subunit protein eS27z (84 aa).

The C4-type zinc finger occupies 39–61; that stretch reads CQGCFNITTVFSHSQTVVMCGNC.

Belongs to the eukaryotic ribosomal protein eS27 family. In terms of assembly, (Microbial infection) May interact with Tomato yellow leaf curl virus (TYLCV) and papaya leaf curl China virus (PaLcuCNV) C2 proteins. This interaction prevents activation of Jasmonate signaling, thereby facilitating viral uptake by insects vectors. Zn(2+) serves as cofactor.

The sequence is that of Small ribosomal subunit protein eS27z (RPS27A) from Arabidopsis thaliana (Mouse-ear cress).